We begin with the raw amino-acid sequence, 921 residues long: Isoleucine--tRNA ligase (921 aa).

A 'HIGH' region motif is present at residues 57-67 (PYANGELHMGH). Glu552 is an L-isoleucyl-5'-AMP binding site. The 'KMSKS' region motif lies at 593–597 (KMSKS). Lys596 contributes to the ATP binding site. Residues Cys888, Cys891, Cys908, and Cys911 each coordinate Zn(2+).

Belongs to the class-I aminoacyl-tRNA synthetase family. IleS type 1 subfamily. As to quaternary structure, monomer. The cofactor is Zn(2+).

It is found in the cytoplasm. It carries out the reaction tRNA(Ile) + L-isoleucine + ATP = L-isoleucyl-tRNA(Ile) + AMP + diphosphate. Functionally, catalyzes the attachment of isoleucine to tRNA(Ile). As IleRS can inadvertently accommodate and process structurally similar amino acids such as valine, to avoid such errors it has two additional distinct tRNA(Ile)-dependent editing activities. One activity is designated as 'pretransfer' editing and involves the hydrolysis of activated Val-AMP. The other activity is designated 'posttransfer' editing and involves deacylation of mischarged Val-tRNA(Ile). This Listeria monocytogenes serovar 1/2a (strain ATCC BAA-679 / EGD-e) protein is Isoleucine--tRNA ligase.